The sequence spans 211 residues: Small ribosomal subunit protein uS5 (211 aa).

In terms of domain architecture, S5 DRBM spans Leu50–Ile113.

Belongs to the universal ribosomal protein uS5 family. Part of the 30S ribosomal subunit. Contacts protein S4.

Functionally, with S4 and S12 plays an important role in translational accuracy. This chain is Small ribosomal subunit protein uS5, found in Methanococcoides burtonii (strain DSM 6242 / NBRC 107633 / OCM 468 / ACE-M).